The following is a 779-amino-acid chain: Angiomotin-like protein 2 (779 aa).

Disordered regions lie at residues 41-215 (GGAG…QYPH) and 263-308 (QYLQ…TSGS). 2 stretches are compositionally biased toward basic and acidic residues: residues 100-112 (KGEELPTYEEAKA) and 141-152 (RRQDEALRELRH). The required for interaction with CDH5 stretch occupies residues 101 to 307 (GEELPTYEEA…SAQASSATSG (207 aa)). Tyr107 bears the Phosphotyrosine; by FGFR1 mark. Over residues 160-169 (ERLLQLSLER) the composition is skewed to low complexity. Positions 177-193 (HMSSSHSFPQLARNQQG) are enriched in polar residues. Residues 196–213 (LRGPPAEGPESRGPPPQY) show a composition bias toward pro residues. The tract at residues 220–307 (HETTTAVTDP…SAQASSATSG (88 aa)) is required for interaction with CDH1. The segment covering 298-308 (SAQASSATSGS) has biased composition (low complexity). Residues 308–581 (SAHLAQMEAV…KYLEERAMRQ (274 aa)) adopt a coiled-coil conformation. Residues Lys347 and Lys408 each participate in a glycyl lysine isopeptide (Lys-Gly) (interchain with G-Cter in ubiquitin) cross-link. Disordered regions lie at residues 522–543 (RAQQRQAGAPGGSSGSGGSPEL) and 679–753 (TQGW…GCSS). Gly residues predominate over residues 530–539 (APGGSSGSGG). Composition is skewed to polar residues over residues 680–690 (QGWQGLSSSER) and 725–740 (DGSTQTEGPPDSTSTC). Ser759 and Ser762 each carry phosphoserine. Residues 776-779 (EILI) carry the PDZ-binding motif.

This sequence belongs to the angiomotin family. In terms of assembly, part of a complex composed of AMOTL2, MAGI1 and CDH5, within the complex AMOTL2 acts as a scaffold protein for the interaction of MAGI1 with CDH5. The complex is required for coupling actin fibers to cell junctions in endothelial cells. Within the complex AMOTL2 (via its N-terminus) interacts with CDH5. Interacts (via N-terminus) with MAGI1. Interacts (via N-terminus) with ACTB; the interaction facilitates binding of cell junction complexes to actin fibers in endothelial cells. Interacts with CDH1; the interaction may facilitate binding of radial actin fibers to cell junction complexes. Interacts with SRC. Interacts with YAP1; the interaction is required for ubiquitination of AMOTL2 and localization of YAP1 to tight junctions. Interacts with WWP1; the interaction facilitates WWP1 interaction with the Crumbs complex and subsequent WWP1 translocation to the plasma membrane. WWP1 interaction with the Crumbs complex promotes WWP1 monoubiquitination of AMOTL2 which subsequently activates the Hippo signaling pathway. When ubiquitinated interacts with LATS2 (via UBA domain); the interaction promotes LATS2 phosphorylation of YAP1. Interacts (via PPXY motif) with WWTR1/TAZ (via WW domain); the interaction promotes WWTR1/TAZ localization to the cytoplasm and thereby inhibition of its transcriptional properties. Interacts with PHLDB2; interaction may facilitate PHLDB2 localization to the myotube podosome cortex that surrounds the core. In terms of processing, monoubiquitinated at Lys-347 and Lys-408 by Crumbs complex-bound WWP1. De-ubiquitinated at Lys-347 and Lys-408 by USP9X; the interaction may be promoted by cell contact inhibition. Deubiquitination of AMOTL2 negatively regulates Hippo signaling activation. Phosphorylation at Tyr-107 is necessary for efficient binding to SRC and synergistically functioning with SRC to activate the downstream MAPK pathway.

The protein localises to the recycling endosome. The protein resides in the cytoplasm. Its subcellular location is the cell projection. It localises to the podosome. It is found in the cell junction. Functionally, regulates the translocation of phosphorylated SRC to peripheral cell-matrix adhesion sites. Required for proper architecture of actin filaments. Plays a role in coupling actin fibers to cell junctions in endothelial cells and is therefore required for correct endothelial cell morphology via facilitating transcellular transmission of mechanical force resulting in endothelial cell elongation. Required for the anchoring of radial actin fibers to CDH1 junction complexes at the cell membrane which facilitates organization of radial actin fiber structure and cellular response to contractile forces. This contributes to maintenance of cell area, size, shape, epithelial sheet organization and trophectoderm cell properties that facilitate blastocyst zona hatching. Inhibits the Wnt/beta-catenin signaling pathway, probably by recruiting CTNNB1 to recycling endosomes and hence preventing its translocation to the nucleus. Participates in angiogenesis. Activates the Hippo signaling pathway in response to cell contact inhibition via interaction with and ubiquitination by Crumbs complex-bound WWP1. Ubiquitinated AMOTL2 then interacts with LATS2 which in turn phosphorylates YAP1, excluding it from the nucleus and localizing it to the cytoplasm and tight junctions, therefore ultimately repressing YAP1-driven transcription of target genes. Acts to inhibit WWTR1/TAZ transcriptional coactivator activity via sequestering WWTR1/TAZ in the cytoplasm and at tight junctions. Regulates the size and protein composition of the podosome cortex and core at myofibril neuromuscular junctions. Selectively promotes FGF-induced MAPK activation through SRC. May play a role in the polarity, proliferation and migration of endothelial cells. In Homo sapiens (Human), this protein is Angiomotin-like protein 2.